Consider the following 145-residue polypeptide: U20-hexatoxin-Hi1a (145 aa).

A signal peptide spans 1–16; that stretch reads MYQFLIIVILAAFVNG. Thyroglobulin type-1 domains are found at residues 20 to 73 and 82 to 145; these read KTEC…GQPM and ACEC…RLEC. 5 disulfide bridges follow: Cys23–Cys45, Cys56–Cys63, Cys85–Cys106, Cys117–Cys124, and Cys126–Cys145.

As to expression, expressed by the venom gland.

The protein resides in the secreted. In terms of biological role, cysteine proteinase inhibitor. In Hadronyche infensa (Fraser island funnel-web spider), this protein is U20-hexatoxin-Hi1a.